Consider the following 255-residue polypeptide: Pyrroloquinoline-quinone synthase (255 aa).

The protein belongs to the PqqC family.

It catalyses the reaction 6-(2-amino-2-carboxyethyl)-7,8-dioxo-1,2,3,4,7,8-hexahydroquinoline-2,4-dicarboxylate + 3 O2 = pyrroloquinoline quinone + 2 H2O2 + 2 H2O + H(+). It functions in the pathway cofactor biosynthesis; pyrroloquinoline quinone biosynthesis. Functionally, ring cyclization and eight-electron oxidation of 3a-(2-amino-2-carboxyethyl)-4,5-dioxo-4,5,6,7,8,9-hexahydroquinoline-7,9-dicarboxylic-acid to PQQ. The polypeptide is Pyrroloquinoline-quinone synthase (Cereibacter sphaeroides (strain ATCC 17029 / ATH 2.4.9) (Rhodobacter sphaeroides)).